The sequence spans 320 residues: NAD kinase (320 aa).

The active-site Proton acceptor is D96. Residues 96–97, R101, 170–171, D200, and 211–216 contribute to the NAD(+) site; these read DG, NE, and TAYAFS.

Belongs to the NAD kinase family. A divalent metal cation is required as a cofactor.

The protein localises to the cytoplasm. The enzyme catalyses NAD(+) + ATP = ADP + NADP(+) + H(+). Its function is as follows. Involved in the regulation of the intracellular balance of NAD and NADP, and is a key enzyme in the biosynthesis of NADP. Catalyzes specifically the phosphorylation on 2'-hydroxyl of the adenosine moiety of NAD to yield NADP. This Rhodococcus opacus (strain B4) protein is NAD kinase.